Here is a 387-residue protein sequence, read N- to C-terminus: Formate-dependent phosphoribosylglycinamide formyltransferase (387 aa).

Residues E12 to L13 and E72 contribute to the N(1)-(5-phospho-beta-D-ribosyl)glycinamide site. ATP-binding positions include R104, K145, S150 to Q155, E185 to I188, and E193. The region spanning D109–L300 is the ATP-grasp domain. Mg(2+) contacts are provided by E258 and E270. Residues D277, K348, and R355 to R356 contribute to the N(1)-(5-phospho-beta-D-ribosyl)glycinamide site.

It belongs to the PurK/PurT family. Homodimer.

It carries out the reaction N(1)-(5-phospho-beta-D-ribosyl)glycinamide + formate + ATP = N(2)-formyl-N(1)-(5-phospho-beta-D-ribosyl)glycinamide + ADP + phosphate + H(+). It participates in purine metabolism; IMP biosynthesis via de novo pathway; N(2)-formyl-N(1)-(5-phospho-D-ribosyl)glycinamide from N(1)-(5-phospho-D-ribosyl)glycinamide (formate route): step 1/1. Its function is as follows. Involved in the de novo purine biosynthesis. Catalyzes the transfer of formate to 5-phospho-ribosyl-glycinamide (GAR), producing 5-phospho-ribosyl-N-formylglycinamide (FGAR). Formate is provided by PurU via hydrolysis of 10-formyl-tetrahydrofolate. The chain is Formate-dependent phosphoribosylglycinamide formyltransferase from Leptospira interrogans serogroup Icterohaemorrhagiae serovar copenhageni (strain Fiocruz L1-130).